Reading from the N-terminus, the 472-residue chain is Ribulose bisphosphate carboxylase large chain 1 (472 aa).

Substrate-binding residues include N115 and T165. Residue K167 is the Proton acceptor of the active site. Position 169 (K169) interacts with substrate. Mg(2+) contacts are provided by K193, D195, and E196. N6-carboxylysine is present on K193. H286 functions as the Proton acceptor in the catalytic mechanism. R287, H319, and S371 together coordinate substrate.

The protein belongs to the RuBisCO large chain family. Type I subfamily. Heterohexadecamer of 8 large chains and 8 small chains. It depends on Mg(2+) as a cofactor.

The catalysed reaction is 2 (2R)-3-phosphoglycerate + 2 H(+) = D-ribulose 1,5-bisphosphate + CO2 + H2O. It catalyses the reaction D-ribulose 1,5-bisphosphate + O2 = 2-phosphoglycolate + (2R)-3-phosphoglycerate + 2 H(+). Functionally, ruBisCO catalyzes two reactions: the carboxylation of D-ribulose 1,5-bisphosphate, the primary event in carbon dioxide fixation, as well as the oxidative fragmentation of the pentose substrate. Both reactions occur simultaneously and in competition at the same active site. In Hydrogenovibrio marinus, this protein is Ribulose bisphosphate carboxylase large chain 1.